A 119-amino-acid polypeptide reads, in one-letter code: uncharacterized protein (119 aa).

The first 23 residues, 1–23 (MVKWAVSILVNALLLIVIDGYID), serve as a signal peptide directing secretion. The next 3 helical transmembrane spans lie at 27-47 (ISSIGAAIIASLILSILNVLI), 50-70 (LLIIFTLPVTMVTLGLFLFVI), and 88-108 (IDGFGTAIWASVILSVFHLLI).

It localises to the cell membrane. This is an uncharacterized protein from Bacillus subtilis (strain 168).